The primary structure comprises 358 residues: Phosphoserine aminotransferase (358 aa).

Arg41 serves as a coordination point for L-glutamate. Pyridoxal 5'-phosphate contacts are provided by residues 75–76, Trp101, Thr150, Asp170, and Gln193; that span reads AR. At Lys194 the chain carries N6-(pyridoxal phosphate)lysine. 235 to 236 contributes to the pyridoxal 5'-phosphate binding site; it reads NT.

Belongs to the class-V pyridoxal-phosphate-dependent aminotransferase family. SerC subfamily. In terms of assembly, homodimer. It depends on pyridoxal 5'-phosphate as a cofactor.

It is found in the cytoplasm. It catalyses the reaction O-phospho-L-serine + 2-oxoglutarate = 3-phosphooxypyruvate + L-glutamate. It carries out the reaction 4-(phosphooxy)-L-threonine + 2-oxoglutarate = (R)-3-hydroxy-2-oxo-4-phosphooxybutanoate + L-glutamate. It functions in the pathway amino-acid biosynthesis; L-serine biosynthesis; L-serine from 3-phospho-D-glycerate: step 2/3. The protein operates within cofactor biosynthesis; pyridoxine 5'-phosphate biosynthesis; pyridoxine 5'-phosphate from D-erythrose 4-phosphate: step 3/5. Catalyzes the reversible conversion of 3-phosphohydroxypyruvate to phosphoserine and of 3-hydroxy-2-oxo-4-phosphonooxybutanoate to phosphohydroxythreonine. The sequence is that of Phosphoserine aminotransferase from Histophilus somni (strain 129Pt) (Haemophilus somnus).